The following is a 445-amino-acid chain: FAS-associated factor 2 (445 aa).

The region spanning 12-53 (EQTEKLLQFQDLTGIESMDQCRQTLQQHNWNIEAAVQDRLNE) is the UBA domain. Residues 275-353 (SERLEREERN…ERKSECLPAE (79 aa)) are a coiled coil. Positions 303-348 (ADQEKERKKKEKQEQKRREEEEAQLKQMLEERKKRNLEEEKERKSE) are enriched in basic and acidic residues. The disordered stretch occupies residues 303–354 (ADQEKERKKKEKQEQKRREEEEAQLKQMLEERKKRNLEEEKERKSECLPAEP). Residues 357-439 (DHPDNVKIIF…GLSQSQLLFV (83 aa)) enclose the UBX domain.

It is found in the cytoplasm. The protein localises to the lipid droplet. The protein resides in the endoplasmic reticulum. Its function is as follows. Plays an important role in endoplasmic reticulum-associated degradation (ERAD) that mediates ubiquitin-dependent degradation of misfolded endoplasmic reticulum proteins. Involved in inhibition of lipid droplet degradation. Involved in stress granule disassembly. This is FAS-associated factor 2 (faf2) from Xenopus tropicalis (Western clawed frog).